The chain runs to 188 residues: Adenine phosphoribosyltransferase (188 aa).

The protein belongs to the purine/pyrimidine phosphoribosyltransferase family. Homodimer.

The protein resides in the cytoplasm. The catalysed reaction is AMP + diphosphate = 5-phospho-alpha-D-ribose 1-diphosphate + adenine. The protein operates within purine metabolism; AMP biosynthesis via salvage pathway; AMP from adenine: step 1/1. Catalyzes a salvage reaction resulting in the formation of AMP, that is energically less costly than de novo synthesis. This chain is Adenine phosphoribosyltransferase, found in Paraburkholderia phymatum (strain DSM 17167 / CIP 108236 / LMG 21445 / STM815) (Burkholderia phymatum).